We begin with the raw amino-acid sequence, 5218 residues long: HC-toxin synthetase (5218 aa).

The segment at 223–620 (SARAHEQDAN…VGRSDTQIKL (398 aa)) is adenylation 1. The 75-residue stretch at 769-843 (MNDDSLLLTA…TAASCIKSAQ (75 aa)) folds into the Carrier 1 domain. The residue at position 803 (serine 803) is an O-(pantetheine 4'-phosphoryl)serine. Positions 858–1154 (IPVSPIQKLF…GWFTTISPVY (297 aa)) are condensation 1. The interval 1338-1806 (EGVYPGSPMQ…LPIVSEHDTA (469 aa)) is epimerization. The interval 1828–2233 (SRKVVEHPQR…IGRKDTQVKM (406 aa)) is adenylation 2. The region spanning 2379–2453 (ETTDTVEDRL…DMAKLFSHGQ (75 aa)) is the Carrier 2 domain. Serine 2414 carries the O-(pantetheine 4'-phosphoryl)serine modification. The segment at 2531–2929 (EDVFPCTPMQ…MEQFGHNLQT (399 aa)) is condensation 2. The segment at 2979–3386 (LEETAQSQPA…GRKDGQIKLR (408 aa)) is adenylation 3. Residues 3532–3608 (QVLTTNESVL…DMAGQISFVQ (77 aa)) enclose the Carrier 3 domain. An O-(pantetheine 4'-phosphoryl)serine modification is found at serine 3569. Positions 3649–4102 (EDVYPCTPLQ…PALSEAHLAE (454 aa)) are condensation 3. Residues 4134–4530 (RRAQQSPNSQ…NLYYVRRKDS (397 aa)) form an adenylation 4 region. The 75-residue stretch at 4666-4740 (THTQKLLRQL…AMSSLIDEHN (75 aa)) folds into the Carrier 4 domain. Position 4701 is an O-(pantetheine 4'-phosphoryl)serine (serine 4701). Residues 4785 to 5101 (TLPCTEYQQM…SAIREFIPQA (317 aa)) are condensation 4.

This sequence belongs to the NRP synthetase family. The cofactor is pantetheine 4'-phosphate.

It functions in the pathway mycotoxin biosynthesis; HC-toxin biosynthesis. Functionally, non-ribosomal peptide synthetase, part of the diffuse TOX2 gene cluster that mediates the biosynthesis of the HC-toxin, cyclic tetrapeptide of structure cyclo(D-Pro-L-Ala-D-Ala-L-Aeo), where Aeo stands for 2-amino-9,10-epoxi-8-oxodecanoic acid. HC-toxin is a determinant of specificity and virulence in the interaction between the producing fungus and its host, maize. HTS1, contains four modules, one for each amino acid in HC-toxin, with the order of activation being most likely Pro, Ala, Ala, and Aeo. In addition, HTS1 has one epimerase domain between modules 1 and 2, which is responsible for epimerizing L-Pro to D-Pro. The absence of an epimerizing domain after module 3, for producing D-Ala, can be explained by the presence in the cluster of TOXG, an Ala racemase, which produces D-Ala for incorporation by HTS1 into HC-toxin. The chain is HC-toxin synthetase from Cochliobolus carbonum (Maize leaf spot fungus).